A 339-amino-acid polypeptide reads, in one-letter code: Biotin synthase (339 aa).

Residues 55–282 enclose the Radical SAM core domain; sequence NAVQLSTLLS…KAVVRLSAGR (228 aa). Residues C70, C74, and C77 each contribute to the [4Fe-4S] cluster site. Residues C114, C145, C205, and R277 each coordinate [2Fe-2S] cluster.

This sequence belongs to the radical SAM superfamily. Biotin synthase family. In terms of assembly, homodimer. It depends on [4Fe-4S] cluster as a cofactor. [2Fe-2S] cluster serves as cofactor.

The enzyme catalyses (4R,5S)-dethiobiotin + (sulfur carrier)-SH + 2 reduced [2Fe-2S]-[ferredoxin] + 2 S-adenosyl-L-methionine = (sulfur carrier)-H + biotin + 2 5'-deoxyadenosine + 2 L-methionine + 2 oxidized [2Fe-2S]-[ferredoxin]. It participates in cofactor biosynthesis; biotin biosynthesis; biotin from 7,8-diaminononanoate: step 2/2. Functionally, catalyzes the conversion of dethiobiotin (DTB) to biotin by the insertion of a sulfur atom into dethiobiotin via a radical-based mechanism. The polypeptide is Biotin synthase (Burkholderia orbicola (strain MC0-3)).